The following is a 473-amino-acid chain: Photosystem II CP43 reaction center protein (473 aa).

Residues 1 to 14 (MKILYSLRRFYHVE) constitute a propeptide that is removed on maturation. Thr-15 carries the N-acetylthreonine modification. Thr-15 is subject to Phosphothreonine. The next 5 membrane-spanning stretches (helical) occupy residues 69–93 (LFEVAHFVPEKPMYEQGLILLPHLA), 134–155 (LLGPETLEESFPFFGYVWKDRN), 178–200 (KALYFGGVYDTWAPGGGDVRKIT), 255–275 (KPFAWARRAFVWSGEAYLSYS), and 291–312 (WFNNTAYPSEFYGPTGPEASQA). Glu-367 contacts [CaMn4O5] cluster. A helical membrane pass occupies residues 447–471 (RARAAAAGFEKGIDRDLEPVLYMNP).

The protein belongs to the PsbB/PsbC family. PsbC subfamily. As to quaternary structure, PSII is composed of 1 copy each of membrane proteins PsbA, PsbB, PsbC, PsbD, PsbE, PsbF, PsbH, PsbI, PsbJ, PsbK, PsbL, PsbM, PsbT, PsbX, PsbY, PsbZ, Psb30/Ycf12, at least 3 peripheral proteins of the oxygen-evolving complex and a large number of cofactors. It forms dimeric complexes. The cofactor is Binds multiple chlorophylls and provides some of the ligands for the Ca-4Mn-5O cluster of the oxygen-evolving complex. It may also provide a ligand for a Cl- that is required for oxygen evolution. PSII binds additional chlorophylls, carotenoids and specific lipids..

It is found in the plastid. It localises to the chloroplast thylakoid membrane. One of the components of the core complex of photosystem II (PSII). It binds chlorophyll and helps catalyze the primary light-induced photochemical processes of PSII. PSII is a light-driven water:plastoquinone oxidoreductase, using light energy to abstract electrons from H(2)O, generating O(2) and a proton gradient subsequently used for ATP formation. This is Photosystem II CP43 reaction center protein from Brachypodium distachyon (Purple false brome).